The following is a 783-amino-acid chain: MQALVMLLATGATYYLGLLAAAAAAVNPGRPNTPGSLPAHRRQKRDWIWNQMHIDEERNDSLPHYVGKIKSSVDPKKTEYQLRGESAGKVFRVDKNTGDVYALERLDREKISEYHLTALVVDKDSKKNLESPSSFTIKVHDVNDNWPVFTHRVFNASVPEMSGIGTSVIQVTAMDADDPTVADHASVVYQLTKGKENFDIRGSGLIVTMNKHLDRETQDKYEVVVKAEDAQGRRGESGTATVFITLQDVNDNFPIFTQNRYTFSVPEDIRVGSPLGSLFVEDPDEPQNRKTKYSFVQGEYRDTFTIDTDPSHNEGIIKPIKPLDYERIRQYSFTIEATDPTIDLRYLGSTSPKNIARVIINVTDVDEPPIFQQPFYHFQLQENQKKPLIGSVLAKDPDAAQRDIRYSIRRTSDKGQFFGITKKGGIYNDKELDREVYPWYNLTVEAKEVDLSGTPTGKESIVQVHIEVMDENDNAPEFAKPYEPKVCENAPQGKLVVQISATDKDITPRDVKFKFSLSTEDSNFTLIDNHDNTANIIVKYGYFDRERAKVHHLPVLISDNGRPSLTGTSTLHVTVCKCNEHGEFTLCEEAAAQVGISIQALVAIFLCILTFTVITLLIILRRRLRKQARAHGKSVPEIHEQLVTYDEEGGGEMDTTSYDVSVLNSARHGGAKPPRPALDARPSLYAQVQKPPRQAPGAHAPGEMAAMIGVKKDEADHDGGGPPYDTLHIYGYEGAESIAESLSSLGTDSSDSDIDYDFLNDWGTRFKMLAELYGSDPQEELVY.

An N-terminal signal peptide occupies residues 1–25; the sequence is MQALVMLLATGATYYLGLLAAAAAA. The propeptide occupies 26–45; sequence VNPGRPNTPGSLPAHRRQKR. 5 consecutive Cadherin domains span residues 44–149, 150–256, 257–371, 372–478, and 478–585; these read KRDW…WPVF, THRV…FPIF, TQNR…PPIF, QQPF…APEF, and FAKP…GEFT. At 46–599 the chain is on the extracellular side; sequence DWIWNQMHID…AAAQVGISIQ (554 aa). 2 residues coordinate Ca(2+): Glu-56 and Glu-57. Asn-59 carries an N-linked (GlcNAc...) asparagine glycan. The Ca(2+) site is built by Asp-107, Glu-109, Asp-141, Val-142, Asn-143, Asp-144, and Asn-145. Asn-155 carries an N-linked (GlcNAc...) asparagine glycan. Residues Asp-175, Asp-177, His-184, and Asp-229 each coordinate Ca(2+). Asn-361, Asn-441, and Asn-523 each carry an N-linked (GlcNAc...) asparagine glycan. Residues 600 to 620 form a helical membrane-spanning segment; it reads ALVAIFLCILTFTVITLLIIL. The interval 621–660 is required for interaction with PALS1; that stretch reads RRRLRKQARAHGKSVPEIHEQLVTYDEEGGGEMDTTSYDV. Residues 621-783 are Cytoplasmic-facing; the sequence is RRRLRKQARA…GSDPQEELVY (163 aa).

In terms of assembly, part of a complex composed of AMOTL2, MAGI1 and CDH5, within the complex AMOTL2 acts as a scaffold protein for the interaction of MAGI1 with CDH5. The complex is required for coupling actin fibers to cell junctions in endothelial cells. Within the complex AMOTL2 (via its N-terminus) interacts with CDH5. Interacts (via cadherin 5 domain) with PTPRB. Interacts with TRPC4. Interacts with KRIT1. Interacts with PARD3. Interacts with RTN4 (isoform B). Interacts with PALS1; the interaction promotes PALS1 localization to cell junctions and is required for CDH5-mediated vascular lumen formation and endothelial cell. Interacts with CTNND1/p120-catenin; the interaction controls CADH5 endocytosis. Phosphorylated on tyrosine residues by KDR/VEGFR-2. Dephosphorylated by PTPRB. Post-translationally, O-glycosylated.

It localises to the cell junction. The protein resides in the adherens junction. The protein localises to the cell membrane. Its subcellular location is the cytoplasm. Its function is as follows. Cadherins are calcium-dependent cell adhesion proteins. They preferentially interact with themselves in a homophilic manner in connecting cells; cadherins may thus contribute to the sorting of heterogeneous cell types. This cadherin may play a important role in endothelial cell biology through control of the cohesion and organization of the intercellular junctions. It associates with alpha-catenin forming a link to the cytoskeleton. Plays a role in coupling actin fibers to cell junctions in endothelial cells, via acting as a cell junctional complex anchor for AMOTL2 and MAGI1. Acts in concert with KRIT1 and PALS1 to establish and maintain correct endothelial cell polarity and vascular lumen. These effects are mediated by recruitment and activation of the Par polarity complex and RAP1B. Required for activation of PRKCZ and for localization of phosphorylated PRKCZ, PARD3, TIAM1 and RAP1B to the cell junction. Associates with CTNND1/p120-catenin to control CADH5 endocytosis. The protein is Cadherin-5 of Bos taurus (Bovine).